A 124-amino-acid polypeptide reads, in one-letter code: Large ribosomal subunit protein bL12 (124 aa).

This sequence belongs to the bacterial ribosomal protein bL12 family. As to quaternary structure, homodimer. Part of the ribosomal stalk of the 50S ribosomal subunit. Forms a multimeric L10(L12)X complex, where L10 forms an elongated spine to which 2 to 4 L12 dimers bind in a sequential fashion. Binds GTP-bound translation factors.

Forms part of the ribosomal stalk which helps the ribosome interact with GTP-bound translation factors. Is thus essential for accurate translation. This Akkermansia muciniphila (strain ATCC BAA-835 / DSM 22959 / JCM 33894 / BCRC 81048 / CCUG 64013 / CIP 107961 / Muc) protein is Large ribosomal subunit protein bL12.